The chain runs to 394 residues: Acetyl-CoA acetyltransferase (394 aa).

Cys89 acts as the Acyl-thioester intermediate in catalysis. Catalysis depends on proton acceptor residues His350 and Cys380.

The protein belongs to the thiolase-like superfamily. Thiolase family. Homotetramer.

It is found in the cytoplasm. It carries out the reaction 2 acetyl-CoA = acetoacetyl-CoA + CoA. The protein operates within biopolymer metabolism; poly-(R)-3-hydroxybutanoate biosynthesis. It participates in metabolic intermediate biosynthesis; (R)-mevalonate biosynthesis; (R)-mevalonate from acetyl-CoA: step 1/3. The polypeptide is Acetyl-CoA acetyltransferase (Allochromatium vinosum (strain ATCC 17899 / DSM 180 / NBRC 103801 / NCIMB 10441 / D) (Chromatium vinosum)).